The sequence spans 417 residues: Serine--tRNA ligase (417 aa).

232-234 is an L-serine binding site; sequence TSE. Position 263 to 265 (263 to 265) interacts with ATP; sequence RKE. An L-serine-binding site is contributed by E286. 350–353 contacts ATP; it reads EISS. S385 is an L-serine binding site.

The protein belongs to the class-II aminoacyl-tRNA synthetase family. Type-1 seryl-tRNA synthetase subfamily. In terms of assembly, homodimer. The tRNA molecule binds across the dimer.

The protein localises to the cytoplasm. It catalyses the reaction tRNA(Ser) + L-serine + ATP = L-seryl-tRNA(Ser) + AMP + diphosphate + H(+). It carries out the reaction tRNA(Sec) + L-serine + ATP = L-seryl-tRNA(Sec) + AMP + diphosphate + H(+). The protein operates within aminoacyl-tRNA biosynthesis; selenocysteinyl-tRNA(Sec) biosynthesis; L-seryl-tRNA(Sec) from L-serine and tRNA(Sec): step 1/1. Functionally, catalyzes the attachment of serine to tRNA(Ser). Is also able to aminoacylate tRNA(Sec) with serine, to form the misacylated tRNA L-seryl-tRNA(Sec), which will be further converted into selenocysteinyl-tRNA(Sec). The polypeptide is Serine--tRNA ligase (Campylobacter hominis (strain ATCC BAA-381 / DSM 21671 / CCUG 45161 / LMG 19568 / NCTC 13146 / CH001A)).